The primary structure comprises 283 residues: MGNANGKDEDAAAGSGGADVTSSSARSNGGDPSARSRHRRPSSDSMSSSPPGSPARSPSPFLFAPQVPVAPLQRANAPPPNNIQWNQSQRVFDNPPEQGIPTIITWNQGGNDVAVEGSWDNWRSRKKLQKSGKDHSILFVLPSGIYHYKVIVDGESKYIPDLPFVADEVGNVCNILDVHNFVPENPESIVEFEAPPSPDHSYGQTLPAAEDYAKEPLAVPPQLHLTLLGTTEETAIATKPQHVVLNHVFIEQGWTPQSIVALGLTHRFESKYITVVLYKPLTR.

The span at 1-10 (MGNANGKDED) shows a compositional bias: basic and acidic residues. Positions 1–63 (MGNANGKDED…PARSPSPFLF (63 aa)) are disordered. Gly2 carries N-myristoyl glycine lipidation. Residues 43–60 (SDSMSSSPPGSPARSPSP) are compositionally biased toward low complexity. Residues 101–178 (PTIITWNQGG…VGNVCNILDV (78 aa)) form a kinase-interacting sequence (KIS) region. An association with SNF1 complex (ASC) region spans residues 215–283 (EPLAVPPQLH…TVVLYKPLTR (69 aa)).

Belongs to the 5'-AMP-activated protein kinase beta subunit family. In terms of assembly, subunit of a probable heterotrimeric complex consisting of an alpha catalytic (KIN10 or KIN11) subunit, and a beta (KINB) and a gamma (KING or SNF4) non-catalytic regulatory subunits. Interacts with SNF4 and CBL1. Interacts with FLZ1, FLZ2, FLZ8, FLZ9, FLZ10, FLZ12, FLZ13, FLZ14 and FLZ15. Sumoylated by SIZ1. Expressed in vegetative organs and, to lower extent, in reproductive organs.

The protein localises to the cell membrane. Its function is as follows. Regulatory subunit of the probable trimeric SNF1-related protein kinase (SnRK) complex, which may play a role in a signal transduction cascade regulating gene expression and carbohydrate metabolism in higher plants. The SnRK complex may also be involved in the regulation of fatty acid synthesis by phosphorylation of acetyl-CoA carboxylase and in assimilation of nitrogen by phosphorylating nitrate reductase. This is SNF1-related protein kinase regulatory subunit beta-1 (KINB1) from Arabidopsis thaliana (Mouse-ear cress).